Consider the following 274-residue polypeptide: Phloretin hydrolase (274 aa).

Zn(2+)-binding residues include His-123, Glu-154, His-251, and Glu-255.

It belongs to the DAPG/phloretin hydrolase family. In terms of assembly, homodimer. It depends on Zn(2+) as a cofactor.

Its subcellular location is the cytoplasm. The catalysed reaction is phloretin + H2O = phloretate + 1,3,5-trihydroxybenzene + H(+). Catalyzes the hydrolytic C-C cleavage of phloretin to phloroglucinol and 3-(4-hydroxyphenyl)propionic acid during flavonoid degradation. Also hydrolyzes other C-acylated phenols. The chain is Phloretin hydrolase (phy) from Eubacterium ramulus.